The sequence spans 276 residues: Acyl-[acyl-carrier-protein]--UDP-N-acetylglucosamine O-acyltransferase (276 aa).

The protein belongs to the transferase hexapeptide repeat family. LpxA subfamily. As to quaternary structure, homotrimer.

The protein resides in the cytoplasm. It carries out the reaction a (3R)-hydroxyacyl-[ACP] + UDP-N-acetyl-alpha-D-glucosamine = a UDP-3-O-[(3R)-3-hydroxyacyl]-N-acetyl-alpha-D-glucosamine + holo-[ACP]. It participates in glycolipid biosynthesis; lipid IV(A) biosynthesis; lipid IV(A) from (3R)-3-hydroxytetradecanoyl-[acyl-carrier-protein] and UDP-N-acetyl-alpha-D-glucosamine: step 1/6. In terms of biological role, involved in the biosynthesis of lipid A, a phosphorylated glycolipid that anchors the lipopolysaccharide to the outer membrane of the cell. The chain is Acyl-[acyl-carrier-protein]--UDP-N-acetylglucosamine O-acyltransferase from Rippkaea orientalis (strain PCC 8801 / RF-1) (Cyanothece sp. (strain PCC 8801)).